The primary structure comprises 112 residues: UPF0145 protein Acid_4599 (112 aa).

The protein belongs to the UPF0145 family.

The polypeptide is UPF0145 protein Acid_4599 (Solibacter usitatus (strain Ellin6076)).